We begin with the raw amino-acid sequence, 1014 residues long: DNA translocase FtsK 2 (1014 aa).

Residues 1-21 (MFWIVLIVILLLALAGLFFVR) form a helical membrane-spanning segment. Disordered regions lie at residues 89–142 (ESEP…EDIA), 283–318 (RHAG…RRRV), and 487–525 (SQAV…AVSE). The segment covering 121–140 (EEAETEEAEAAEEEAADTED) has biased composition (acidic residues). The segment covering 298 to 307 (DVSQGQSVSD) has biased composition (polar residues). The FtsK domain occupies 662 to 871 (GQPVVTDLGK…FQVSSKIDSR (210 aa)). Residue 682-687 (GSGKSV) participates in ATP binding.

Belongs to the FtsK/SpoIIIE/SftA family. In terms of assembly, homohexamer. Forms a ring that surrounds DNA.

Its subcellular location is the cell inner membrane. Essential cell division protein that coordinates cell division and chromosome segregation. The N-terminus is involved in assembly of the cell-division machinery. The C-terminus functions as a DNA motor that moves dsDNA in an ATP-dependent manner towards the dif recombination site, which is located within the replication terminus region. Translocation stops specifically at Xer-dif sites, where FtsK interacts with the Xer recombinase, allowing activation of chromosome unlinking by recombination. FtsK orienting polar sequences (KOPS) guide the direction of DNA translocation. FtsK can remove proteins from DNA as it translocates, but translocation stops specifically at XerCD-dif site, thereby preventing removal of XerC and XerD from dif. This Neisseria meningitidis serogroup A / serotype 4A (strain DSM 15465 / Z2491) protein is DNA translocase FtsK 2 (ftsK2).